Here is a 76-residue protein sequence, read N- to C-terminus: Protein CYSTEINE-RICH TRANSMEMBRANE MODULE 11 (76 aa).

The segment at 19 to 45 is disordered; the sequence is GPPPPVGVPPQYYPPPPPPPPPPPPPR. A helical membrane pass occupies residues 47–63; sequence VGFLEGLLAALCCCCLV.

Belongs to the CYSTM1 family. In terms of assembly, heterodimers. Interacts with CYSTM6, CYSTM7 and WIH1/CYSTM13. In terms of tissue distribution, mostly expressed in stems, siliques, leaves and flowers and, to a lower extent, in roots.

The protein resides in the cell membrane. The protein localises to the cytoplasm. Involved in resistance to abiotic stress. The polypeptide is Protein CYSTEINE-RICH TRANSMEMBRANE MODULE 11 (Arabidopsis thaliana (Mouse-ear cress)).